We begin with the raw amino-acid sequence, 354 residues long: Holliday junction branch migration complex subunit RuvB (354 aa).

Over residues Met-1–Asn-10 the composition is skewed to polar residues. Positions Met-1–Arg-36 are disordered. Over residues Lys-12–Arg-36 the composition is skewed to basic and acidic residues. The large ATPase domain (RuvB-L) stretch occupies residues Pro-13–Tyr-196. Residues Ile-35, Arg-36, Gly-77, Lys-80, Thr-81, Thr-82, Glu-143–Tyr-145, Arg-186, Tyr-196, and Arg-233 each bind ATP. Residue Thr-81 coordinates Mg(2+). The segment at Glu-197–Gln-267 is small ATPAse domain (RuvB-S). Residues Pro-270–Gln-354 are head domain (RuvB-H). The DNA site is built by Arg-325 and Arg-330.

The protein belongs to the RuvB family. As to quaternary structure, homohexamer. Forms an RuvA(8)-RuvB(12)-Holliday junction (HJ) complex. HJ DNA is sandwiched between 2 RuvA tetramers; dsDNA enters through RuvA and exits via RuvB. An RuvB hexamer assembles on each DNA strand where it exits the tetramer. Each RuvB hexamer is contacted by two RuvA subunits (via domain III) on 2 adjacent RuvB subunits; this complex drives branch migration. In the full resolvosome a probable DNA-RuvA(4)-RuvB(12)-RuvC(2) complex forms which resolves the HJ.

The protein resides in the cytoplasm. The catalysed reaction is ATP + H2O = ADP + phosphate + H(+). In terms of biological role, the RuvA-RuvB-RuvC complex processes Holliday junction (HJ) DNA during genetic recombination and DNA repair, while the RuvA-RuvB complex plays an important role in the rescue of blocked DNA replication forks via replication fork reversal (RFR). RuvA specifically binds to HJ cruciform DNA, conferring on it an open structure. The RuvB hexamer acts as an ATP-dependent pump, pulling dsDNA into and through the RuvAB complex. RuvB forms 2 homohexamers on either side of HJ DNA bound by 1 or 2 RuvA tetramers; 4 subunits per hexamer contact DNA at a time. Coordinated motions by a converter formed by DNA-disengaged RuvB subunits stimulates ATP hydrolysis and nucleotide exchange. Immobilization of the converter enables RuvB to convert the ATP-contained energy into a lever motion, pulling 2 nucleotides of DNA out of the RuvA tetramer per ATP hydrolyzed, thus driving DNA branch migration. The RuvB motors rotate together with the DNA substrate, which together with the progressing nucleotide cycle form the mechanistic basis for DNA recombination by continuous HJ branch migration. Branch migration allows RuvC to scan DNA until it finds its consensus sequence, where it cleaves and resolves cruciform DNA. This Crocosphaera subtropica (strain ATCC 51142 / BH68) (Cyanothece sp. (strain ATCC 51142)) protein is Holliday junction branch migration complex subunit RuvB.